Consider the following 115-residue polypeptide: Large ribosomal subunit protein bL19 (115 aa).

Belongs to the bacterial ribosomal protein bL19 family.

In terms of biological role, this protein is located at the 30S-50S ribosomal subunit interface and may play a role in the structure and function of the aminoacyl-tRNA binding site. This is Large ribosomal subunit protein bL19 from Streptococcus sanguinis (strain SK36).